Reading from the N-terminus, the 183-residue chain is Cyanate hydratase (183 aa).

Catalysis depends on residues R118, E121, and S144.

Belongs to the cyanase family.

It catalyses the reaction cyanate + hydrogencarbonate + 3 H(+) = NH4(+) + 2 CO2. In terms of biological role, catalyzes the reaction of cyanate with bicarbonate to produce ammonia and carbon dioxide. The chain is Cyanate hydratase from Cryptococcus neoformans var. neoformans serotype D (strain B-3501A) (Filobasidiella neoformans).